The following is a 156-amino-acid chain: Small ribosomal subunit protein uS7 (156 aa).

It belongs to the universal ribosomal protein uS7 family. As to quaternary structure, part of the 30S ribosomal subunit. Contacts proteins S9 and S11.

In terms of biological role, one of the primary rRNA binding proteins, it binds directly to 16S rRNA where it nucleates assembly of the head domain of the 30S subunit. Is located at the subunit interface close to the decoding center, probably blocks exit of the E-site tRNA. The protein is Small ribosomal subunit protein uS7 of Aliivibrio salmonicida (strain LFI1238) (Vibrio salmonicida (strain LFI1238)).